We begin with the raw amino-acid sequence, 394 residues long: Tubby-like F-box protein 2 (394 aa).

Positions 21–44 (SKRSWSKSSHIAPDQTTPPLDNIP) are disordered. Residues 26 to 44 (SKSSHIAPDQTTPPLDNIP) are compositionally biased toward polar residues. The 56-residue stretch at 46–101 (SPWASLPPELLHDIIWRVEESETAWPARAAVVSCASVCKSWRGITMEIVRIPEQCG) folds into the F-box domain. 2 disordered regions span residues 200-225 (ASST…PTNS) and 268-297 (IEEE…PSLR).

The protein belongs to the TUB family. In terms of tissue distribution, ubiquitous.

The sequence is that of Tubby-like F-box protein 2 from Arabidopsis thaliana (Mouse-ear cress).